The chain runs to 512 residues: Probable metalloreductase AIM14 (512 aa).

7 helical membrane passes run 20 to 40 (IKYG…ILIC), 61 to 81 (PLFI…VFHV), 97 to 117 (MSYA…SIGL), 132 to 152 (VIIA…ILEG), 161 to 181 (LWNF…IISL), 191 to 211 (YFYV…CLHA), and 218 to 235 (YAIA…ERYA). The 113-residue stretch at 94–206 (FGRMSYALLP…NITVWLFVGL (113 aa)) folds into the Ferric oxidoreductase domain. One can recognise an FAD-binding FR-type domain in the interval 230–355 (IFERYAKSHS…GGSGISFALP (126 aa)). A compositionally biased stretch (low complexity) spans 427 to 436 (ESLPSSETPS). The disordered stretch occupies residues 427 to 451 (ESLPSSETPSRTVNDDSLSQDTRPK). Positions 437–447 (RTVNDDSLSQD) are enriched in polar residues.

Belongs to the ferric reductase (FRE) family. AIM14 subfamily.

The protein resides in the membrane. Probable cell surface metalloreductase. May be involved in iron or copper homeostasis. The chain is Probable metalloreductase AIM14 (AIM14) from Debaryomyces hansenii (strain ATCC 36239 / CBS 767 / BCRC 21394 / JCM 1990 / NBRC 0083 / IGC 2968) (Yeast).